Here is a 425-residue protein sequence, read N- to C-terminus: 3-isopropylmalate dehydratase large subunit (425 aa).

Residues Cys-305, Cys-365, and Cys-368 each coordinate [4Fe-4S] cluster.

This sequence belongs to the aconitase/IPM isomerase family. LeuC type 2 subfamily. In terms of assembly, heterodimer of LeuC and LeuD. [4Fe-4S] cluster serves as cofactor.

The catalysed reaction is (2R,3S)-3-isopropylmalate = (2S)-2-isopropylmalate. The protein operates within amino-acid biosynthesis; L-leucine biosynthesis; L-leucine from 3-methyl-2-oxobutanoate: step 2/4. Catalyzes the isomerization between 2-isopropylmalate and 3-isopropylmalate, via the formation of 2-isopropylmaleate. The chain is 3-isopropylmalate dehydratase large subunit from Clostridioides difficile (strain 630) (Peptoclostridium difficile).